The following is a 156-amino-acid chain: Calmodulin (156 aa).

Ser2 is modified (N-acetylserine). 4 consecutive EF-hand domains span residues 15–50 (EQIA…LGQN), 51–86 (PTEA…KMKD), 88–123 (DSEE…LGEK), and 124–156 (LTDE…MTSK). Ca(2+) contacts are provided by Asp28, Asp30, Asp32, Thr34, Glu39, Asp64, Asp66, Asn68, Thr70, Glu75, Asp101, Asp103, Asn105, and Glu112. At Lys123 the chain carries N6,N6,N6-trimethyllysine. Asp137, Asp139, Asp141, Gln143, and Glu148 together coordinate Ca(2+).

It belongs to the calmodulin family.

Functionally, calmodulin mediates the control of a large number of enzymes, ion channels and other proteins by Ca(2+). Among the enzymes to be stimulated by the calmodulin-Ca(2+) complex are a number of protein kinases and phosphatases. This is Calmodulin from Strongylocentrotus intermedius (Sea urchin).